The chain runs to 372 residues: Protein RecA (372 aa).

81-88 (GPESSGKT) lines the ATP pocket.

Belongs to the RecA family.

Its subcellular location is the cytoplasm. Functionally, can catalyze the hydrolysis of ATP in the presence of single-stranded DNA, the ATP-dependent uptake of single-stranded DNA by duplex DNA, and the ATP-dependent hybridization of homologous single-stranded DNAs. It interacts with LexA causing its activation and leading to its autocatalytic cleavage. The polypeptide is Protein RecA (Haemophilus ducreyi (strain 35000HP / ATCC 700724)).